Consider the following 80-residue polypeptide: Acyl carrier protein (80 aa).

Residues 1–76 (MTLEEKIIEI…DVIDYLKVRN (76 aa)) form the Carrier domain. Position 36 is an O-(pantetheine 4'-phosphoryl)serine (Ser36).

This sequence belongs to the acyl carrier protein (ACP) family. In terms of processing, 4'-phosphopantetheine is transferred from CoA to a specific serine of apo-ACP by AcpS. This modification is essential for activity because fatty acids are bound in thioester linkage to the sulfhydryl of the prosthetic group.

It localises to the cytoplasm. It functions in the pathway lipid metabolism; fatty acid biosynthesis. In terms of biological role, carrier of the growing fatty acid chain in fatty acid biosynthesis. The polypeptide is Acyl carrier protein (Syntrophus aciditrophicus (strain SB)).